The following is a 233-amino-acid chain: Biosynthetic peptidoglycan transglycosylase (233 aa).

The helical transmembrane segment at 17-37 (IVLAVLALVILPYALIFFYVL) threads the bilayer.

This sequence belongs to the glycosyltransferase 51 family.

The protein localises to the cell inner membrane. It carries out the reaction [GlcNAc-(1-&gt;4)-Mur2Ac(oyl-L-Ala-gamma-D-Glu-L-Lys-D-Ala-D-Ala)](n)-di-trans,octa-cis-undecaprenyl diphosphate + beta-D-GlcNAc-(1-&gt;4)-Mur2Ac(oyl-L-Ala-gamma-D-Glu-L-Lys-D-Ala-D-Ala)-di-trans,octa-cis-undecaprenyl diphosphate = [GlcNAc-(1-&gt;4)-Mur2Ac(oyl-L-Ala-gamma-D-Glu-L-Lys-D-Ala-D-Ala)](n+1)-di-trans,octa-cis-undecaprenyl diphosphate + di-trans,octa-cis-undecaprenyl diphosphate + H(+). The protein operates within cell wall biogenesis; peptidoglycan biosynthesis. Its function is as follows. Peptidoglycan polymerase that catalyzes glycan chain elongation from lipid-linked precursors. The protein is Biosynthetic peptidoglycan transglycosylase of Rhizobium leguminosarum bv. trifolii (strain WSM2304).